Consider the following 445-residue polypeptide: Bifunctional protein GlmU (445 aa).

The tract at residues 1–218 (MRALVLAAGK…LLEITGVNTR (218 aa)) is pyrophosphorylase. UDP-N-acetyl-alpha-D-glucosamine contacts are provided by residues 6–9 (LAAG), Lys-20, Gln-69, 74–75 (GT), 96–98 (YGD), Gly-134, Glu-147, Asn-162, and Asn-216. Position 98 (Asp-98) interacts with Mg(2+). Residue Asn-216 coordinates Mg(2+). The segment at 219–239 (KTLVWLEEQLRMRKIEELLEN) is linker. The interval 240–445 (GVTILDPATT…GWVLKKRKEE (206 aa)) is N-acetyltransferase. Positions 321 and 339 each coordinate UDP-N-acetyl-alpha-D-glucosamine. Residue His-351 is the Proton acceptor of the active site. 2 residues coordinate UDP-N-acetyl-alpha-D-glucosamine: Tyr-354 and Asn-365. Acetyl-CoA is bound by residues Ala-368, 374–375 (NY), Ser-393, Ala-411, and Arg-428.

The protein in the N-terminal section; belongs to the N-acetylglucosamine-1-phosphate uridyltransferase family. This sequence in the C-terminal section; belongs to the transferase hexapeptide repeat family. As to quaternary structure, homotrimer. It depends on Mg(2+) as a cofactor.

Its subcellular location is the cytoplasm. The catalysed reaction is alpha-D-glucosamine 1-phosphate + acetyl-CoA = N-acetyl-alpha-D-glucosamine 1-phosphate + CoA + H(+). It catalyses the reaction N-acetyl-alpha-D-glucosamine 1-phosphate + UTP + H(+) = UDP-N-acetyl-alpha-D-glucosamine + diphosphate. It participates in nucleotide-sugar biosynthesis; UDP-N-acetyl-alpha-D-glucosamine biosynthesis; N-acetyl-alpha-D-glucosamine 1-phosphate from alpha-D-glucosamine 6-phosphate (route II): step 2/2. The protein operates within nucleotide-sugar biosynthesis; UDP-N-acetyl-alpha-D-glucosamine biosynthesis; UDP-N-acetyl-alpha-D-glucosamine from N-acetyl-alpha-D-glucosamine 1-phosphate: step 1/1. It functions in the pathway bacterial outer membrane biogenesis; LPS lipid A biosynthesis. Its function is as follows. Catalyzes the last two sequential reactions in the de novo biosynthetic pathway for UDP-N-acetylglucosamine (UDP-GlcNAc). The C-terminal domain catalyzes the transfer of acetyl group from acetyl coenzyme A to glucosamine-1-phosphate (GlcN-1-P) to produce N-acetylglucosamine-1-phosphate (GlcNAc-1-P), which is converted into UDP-GlcNAc by the transfer of uridine 5-monophosphate (from uridine 5-triphosphate), a reaction catalyzed by the N-terminal domain. In Thermotoga maritima (strain ATCC 43589 / DSM 3109 / JCM 10099 / NBRC 100826 / MSB8), this protein is Bifunctional protein GlmU.